Reading from the N-terminus, the 204-residue chain is Large ribosomal subunit protein uL4 (204 aa).

A disordered region spans residues 53–73; the sequence is AFVSGGGKKPWRQKGRGGARA.

This sequence belongs to the universal ribosomal protein uL4 family. In terms of assembly, part of the 50S ribosomal subunit.

Its function is as follows. One of the primary rRNA binding proteins, this protein initially binds near the 5'-end of the 23S rRNA. It is important during the early stages of 50S assembly. It makes multiple contacts with different domains of the 23S rRNA in the assembled 50S subunit and ribosome. Forms part of the polypeptide exit tunnel. The chain is Large ribosomal subunit protein uL4 from Campylobacter concisus (strain 13826).